A 368-amino-acid chain; its full sequence is C-X-C chemokine receptor type 3 (368 aa).

At 1–53 (MVLEVSDHQVLNDAEVAALLENFSSSYDYGENESDSCCTSPPCPQDFSLNFDR) the chain is on the extracellular side. The N-linked (GlcNAc...) asparagine glycan is linked to N22. Y27 and Y29 each carry sulfotyrosine. N32 carries an N-linked (GlcNAc...) asparagine glycan. Residues 54–80 (AFLPALYSLLFLLGLLGNGAVAAVLLS) traverse the membrane as a helical segment. Over 81–89 (RRTALSSTD) the chain is Cytoplasmic. Residues 90 to 110 (TFLLHLAVADTLLVLTLPLWA) form a helical membrane-spanning segment. Residues 111-125 (VDAAVQWVFGSGLCK) are Extracellular-facing. C124 and C203 are oxidised to a cystine. The helical transmembrane segment at 126–147 (VAGALFNINFYAGALLLACISF) threads the bilayer. At 148–169 (DRYLNIVHATQLYRRGPPARVT) the chain is on the cytoplasmic side. Residues 170–189 (LTCLAVWGLCLLFALPDFIF) traverse the membrane as a helical segment. The Extracellular segment spans residues 190–212 (LSAHHDERLNATHCQYNFPQVGR). Residues 213–233 (TALRVLQLVAGFLLPLLVMAY) form a helical membrane-spanning segment. The Cytoplasmic segment spans residues 234-255 (CYAHILAVLLVSRGQRRLRAMR). A helical transmembrane segment spans residues 256–277 (LVVVVVVAFALCWTPYHLVVLV). Over 278–298 (DILMDLGALARNCGRESRVDV) the chain is Extracellular. The helical transmembrane segment at 299–321 (AKSVTSGLGYMHCCLNPLLYAFV) threads the bilayer. The Cytoplasmic portion of the chain corresponds to 322–368 (GVKFRERMWMLLLRLGCPNQRGLQRQPSSSRRDSSWSETSEASYSGL). The disordered stretch occupies residues 342–368 (RGLQRQPSSSRRDSSWSETSEASYSGL). A compositionally biased stretch (low complexity) spans 357–368 (WSETSEASYSGL).

This sequence belongs to the G-protein coupled receptor 1 family. In terms of assembly, homomer. Forms heteromers with ACKR4. Interacts with PF4/CXCL4. Post-translationally, sulfation on Tyr-27 and Tyr-29 is essential for CXCL10 binding and subsequent signal transduction induction. N-glycosylated. As to expression, isoform 1 and isoform 2 are mainly expressed in heart, kidney, liver and skeletal muscle. Isoform 1 is also expressed in placenta. Isoform 2 is expressed in endothelial cells. Expressed in T-cells (at protein level).

The protein resides in the cell membrane. Receptor for the C-X-C chemokine CXCL9, CXCL10 and CXCL11 and mediates the proliferation, survival and angiogenic activity of human mesangial cells (HMC) through a heterotrimeric G-protein signaling pathway. Binds to CCL21. Probably promotes cell chemotaxis response. Upon activation by PF4, induces activated T-lymphocytes migration mediated via downstream Ras/extracellular signal-regulated kinase (ERK) signaling. Its function is as follows. Receptor for the C-X-C chemokine CXCL4 and also mediates the inhibitory activities of CXCL9, CXCL10 and CXCL11 on the proliferation, survival and angiogenic activity of human microvascular endothelial cells (HMVEC) through a cAMP-mediated signaling pathway. Does not promote cell chemotaxis respons. Interaction with CXCL4 or CXCL10 leads to activation of the p38MAPK pathway and contributes to inhibition of angiogenesis. Overexpression in renal cancer cells down-regulates expression of the anti-apoptotic protein HMOX1 and promotes apoptosis. In terms of biological role, mediates the activity of CXCL11. This Homo sapiens (Human) protein is C-X-C chemokine receptor type 3 (CXCR3).